The chain runs to 353 residues: S-adenosylmethionine:tRNA ribosyltransferase-isomerase (353 aa).

The protein belongs to the QueA family. In terms of assembly, monomer.

It localises to the cytoplasm. The catalysed reaction is 7-aminomethyl-7-carbaguanosine(34) in tRNA + S-adenosyl-L-methionine = epoxyqueuosine(34) in tRNA + adenine + L-methionine + 2 H(+). Its pathway is tRNA modification; tRNA-queuosine biosynthesis. In terms of biological role, transfers and isomerizes the ribose moiety from AdoMet to the 7-aminomethyl group of 7-deazaguanine (preQ1-tRNA) to give epoxyqueuosine (oQ-tRNA). This chain is S-adenosylmethionine:tRNA ribosyltransferase-isomerase, found in Maricaulis maris (strain MCS10) (Caulobacter maris).